A 124-amino-acid polypeptide reads, in one-letter code: Small ribosomal subunit protein uS12 (124 aa).

The segment at 1-26 (MPTISQLVGSERKRLTKKTKSPALKA) is disordered. Residue D89 is modified to 3-methylthioaspartic acid. The tract at residues 104–124 (TAGVKDRRQSRSKYGAKAPKD) is disordered.

It belongs to the universal ribosomal protein uS12 family. As to quaternary structure, part of the 30S ribosomal subunit. Contacts proteins S8 and S17. May interact with IF1 in the 30S initiation complex.

With S4 and S5 plays an important role in translational accuracy. In terms of biological role, interacts with and stabilizes bases of the 16S rRNA that are involved in tRNA selection in the A site and with the mRNA backbone. Located at the interface of the 30S and 50S subunits, it traverses the body of the 30S subunit contacting proteins on the other side and probably holding the rRNA structure together. The combined cluster of proteins S8, S12 and S17 appears to hold together the shoulder and platform of the 30S subunit. This is Small ribosomal subunit protein uS12 from Prochlorococcus marinus (strain MIT 9215).